The primary structure comprises 158 residues: uncharacterized protein (158 aa).

This is an uncharacterized protein from Saccharomyces cerevisiae (strain ATCC 204508 / S288c) (Baker's yeast).